The primary structure comprises 428 residues: Serine--tRNA ligase (428 aa).

Residue 235 to 237 participates in L-serine binding; it reads TAE. Residue 266–268 coordinates ATP; the sequence is RSE. Glutamate 289 is an L-serine binding site. An ATP-binding site is contributed by 353 to 356; sequence EISS. Serine 389 provides a ligand contact to L-serine.

It belongs to the class-II aminoacyl-tRNA synthetase family. Type-1 seryl-tRNA synthetase subfamily. Homodimer. The tRNA molecule binds across the dimer.

It localises to the cytoplasm. It catalyses the reaction tRNA(Ser) + L-serine + ATP = L-seryl-tRNA(Ser) + AMP + diphosphate + H(+). The catalysed reaction is tRNA(Sec) + L-serine + ATP = L-seryl-tRNA(Sec) + AMP + diphosphate + H(+). It participates in aminoacyl-tRNA biosynthesis; selenocysteinyl-tRNA(Sec) biosynthesis; L-seryl-tRNA(Sec) from L-serine and tRNA(Sec): step 1/1. Catalyzes the attachment of serine to tRNA(Ser). Is also able to aminoacylate tRNA(Sec) with serine, to form the misacylated tRNA L-seryl-tRNA(Sec), which will be further converted into selenocysteinyl-tRNA(Sec). The polypeptide is Serine--tRNA ligase (Psychromonas ingrahamii (strain DSM 17664 / CCUG 51855 / 37)).